The chain runs to 179 residues: Repressor of phase 1 flagellin gene (179 aa).

Transcriptional repressor of the FliC phase-1 flagellin. This chain is Repressor of phase 1 flagellin gene (fljA), found in Salmonella typhimurium (strain LT2 / SGSC1412 / ATCC 700720).